The chain runs to 120 residues: MTMTRRRRGQIGEAAAAALLADSGYRILERNYRCPLGEIDIVAAQGEEIVFIEVRTRSSQTFGTPQESVDGRKRLRLRRLAAYYLGSRGLAGRSCRFDVVAVWLDRQERVAGVEVIKGAF.

It belongs to the UPF0102 family.

The protein is UPF0102 protein Moth_0988 of Moorella thermoacetica (strain ATCC 39073 / JCM 9320).